The primary structure comprises 262 residues: ELL-associated factor 2 (262 aa).

The tract at residues 17-104 is necessary for interaction with ELL; sequence LKLGESFEKQ…TGECRLEKLS (88 aa). Over residues 124–144 the composition is skewed to polar residues; the sequence is LEQQQQQMWNPPRTSNLVQHS. Disordered regions lie at residues 124–154 and 170–232; these read LEQQQQQMWNPPRTSNLVQHSPSEDKLSPTS and MDQM…ADTT. A phosphoserine mark is found at S146, S151, and S154. Positions 174 to 192 are enriched in low complexity; the sequence is SSCDSSSDSRSSSSSSSED. The segment at 177-262 is necessary for transactivation activity; the sequence is DSSSDSRSSS…LSESDSDSED (86 aa). The interval 248–262 is necessary for interaction with TCEA1 and transactivation activity; it reads RSDLQLSESDSDSED.

This sequence belongs to the EAF family. As to quaternary structure, component of the super elongation complex (SEC), at least composed of EAF1, EAF2, CDK9, MLLT3/AF9, AFF (AFF1 or AFF4), the P-TEFb complex and ELL (ELL, ELL2 or ELL3). Interacts with ELL, ELL2 and TCEA1.

It localises to the nucleus speckle. Its function is as follows. Acts as a transcriptional transactivator of ELL, ELL2 and TCEA1 elongation activities. Potent inducer of apoptosis in prostatic and non-prostatic cell lines. This is ELL-associated factor 2 (Eaf2) from Rattus norvegicus (Rat).